We begin with the raw amino-acid sequence, 135 residues long: uncharacterized protein (135 aa).

2 consecutive transmembrane segments (helical) span residues 11–31 (ILFF…GYLI) and 57–77 (LGTA…TDAI).

It localises to the cell membrane. This is an uncharacterized protein from Methanocaldococcus jannaschii (strain ATCC 43067 / DSM 2661 / JAL-1 / JCM 10045 / NBRC 100440) (Methanococcus jannaschii).